Reading from the N-terminus, the 979-residue chain is Pro-apoptotic serine protease NMA111 (979 aa).

The interval 1–20 (MTIMNEGKKRSHSSSSDDHL) is disordered. Residues 65-255 (VVSIHFAQVA…LPLDRILRAL (191 aa)) are serine protease. Catalysis depends on charge relay system residues histidine 103, aspartate 134, and serine 217. 2 consecutive PDZ domains span residues 273 to 361 (WLLK…RGGT) and 750 to 836 (SILH…VRDG).

It belongs to the peptidase S1C family.

The protein resides in the nucleus. In terms of biological role, nuclear serine protease which mediates apoptosis. This Candida glabrata (strain ATCC 2001 / BCRC 20586 / JCM 3761 / NBRC 0622 / NRRL Y-65 / CBS 138) (Yeast) protein is Pro-apoptotic serine protease NMA111 (NMA111).